Reading from the N-terminus, the 108-residue chain is uncharacterized protein (108 aa).

Residues 56–108 (ELPSRGCLPAPRPESGQGRLSTGISQNGGRSSAQPCPRCIAGESGHFSHTKNH) form a disordered region. The span at 73–89 (GRLSTGISQNGGRSSAQ) shows a compositional bias: polar residues.

This is an uncharacterized protein from Homo sapiens (Human).